The chain runs to 298 residues: Nitrogenase iron protein (298 aa).

13–20 (GKGGIGKS) contributes to the ATP binding site. C101 is a binding site for [4Fe-4S] cluster. The residue at position 104 (R104) is an ADP-ribosylarginine; by dinitrogenase reductase ADP-ribosyltransferase. C135 provides a ligand contact to [4Fe-4S] cluster.

Belongs to the NifH/BchL/ChlL family. As to quaternary structure, homodimer. The cofactor is [4Fe-4S] cluster. In terms of processing, the reversible ADP-ribosylation of Arg-104 inactivates the nitrogenase reductase and regulates nitrogenase activity.

It carries out the reaction N2 + 8 reduced [2Fe-2S]-[ferredoxin] + 16 ATP + 16 H2O = H2 + 8 oxidized [2Fe-2S]-[ferredoxin] + 2 NH4(+) + 16 ADP + 16 phosphate + 6 H(+). The key enzymatic reactions in nitrogen fixation are catalyzed by the nitrogenase complex, which has 2 components: the iron protein and the molybdenum-iron protein. The protein is Nitrogenase iron protein of Cyanothece sp. (strain PCC 7425 / ATCC 29141).